The chain runs to 376 residues: N-glycosylase/DNA lyase (376 aa).

DNA-binding residues include Asn134, Arg139, and Arg189. The Schiff-base intermediate with DNA role is filled by Lys241. Positions 258 and 260 each coordinate 8-oxoguanine. His262 serves as a coordination point for DNA. 8-oxoguanine contacts are provided by Gln320 and Phe324.

Belongs to the type-1 OGG1 family.

It localises to the nucleus. The enzyme catalyses 2'-deoxyribonucleotide-(2'-deoxyribose 5'-phosphate)-2'-deoxyribonucleotide-DNA = a 3'-end 2'-deoxyribonucleotide-(2,3-dehydro-2,3-deoxyribose 5'-phosphate)-DNA + a 5'-end 5'-phospho-2'-deoxyribonucleoside-DNA + H(+). Its function is as follows. DNA repair enzyme that incises DNA at 8-oxoG residues. Excises 7,8-dihydro-8-oxoguanine and 2,6-diamino-4-hydroxy-5-N-methylformamidopyrimidine (FAPY) from damaged DNA. Has a beta-lyase activity that nicks DNA 3' to the lesion. This is N-glycosylase/DNA lyase (OGG1) from Saccharomyces cerevisiae (strain ATCC 204508 / S288c) (Baker's yeast).